Consider the following 428-residue polypeptide: Enolase (428 aa).

Position 167 (Gln167) interacts with (2R)-2-phosphoglycerate. Catalysis depends on Glu209, which acts as the Proton donor. Positions 246, 289, and 316 each coordinate Mg(2+). (2R)-2-phosphoglycerate contacts are provided by Lys341, Arg370, Ser371, and Lys392. Lys341 acts as the Proton acceptor in catalysis.

This sequence belongs to the enolase family. As to quaternary structure, component of the RNA degradosome, a multiprotein complex involved in RNA processing and mRNA degradation. Requires Mg(2+) as cofactor.

It is found in the cytoplasm. It localises to the secreted. The protein resides in the cell surface. The enzyme catalyses (2R)-2-phosphoglycerate = phosphoenolpyruvate + H2O. The protein operates within carbohydrate degradation; glycolysis; pyruvate from D-glyceraldehyde 3-phosphate: step 4/5. Catalyzes the reversible conversion of 2-phosphoglycerate (2-PG) into phosphoenolpyruvate (PEP). It is essential for the degradation of carbohydrates via glycolysis. In Saccharophagus degradans (strain 2-40 / ATCC 43961 / DSM 17024), this protein is Enolase.